Here is a 310-residue protein sequence, read N- to C-terminus: S-adenosylmethionine-dependent nucleotide dehydratase (310 aa).

A Radical SAM core domain is found at Pro3–Ser221. Cys17, Cys21, and Cys24 together coordinate [4Fe-4S] cluster.

This sequence belongs to the radical SAM superfamily. Viperin family. [4Fe-4S] cluster is required as a cofactor.

It catalyses the reaction GTP + AH2 + S-adenosyl-L-methionine = 3'-deoxy-3',4'-didehydro-GTP + 5'-deoxyadenosine + L-methionine + A + H2O + H(+). Functionally, expression of pVip15 in E.coli (strain MG1655) confers resistance to phage T7; prevents culture collapse upon infection. Catalyzes the conversion of guanosine triphosphate (GTP) to 3'-deoxy-3',4'-didehydro-GTP (ddhGTP), probably via a SAM-dependent radical mechanism. The modified nucleotide represses transcription from T7 RNA polymerase-directed genes (possibly by acting as chain terminators), strongly suggesting these nucleotides block viral polymerase transcription. In Coraliomargarita akajimensis (strain DSM 45221 / IAM 15411 / JCM 23193 / KCTC 12865 / 04OKA010-24), this protein is S-adenosylmethionine-dependent nucleotide dehydratase.